The primary structure comprises 132 residues: Tumor suppressor ARF (132 aa).

The tract at residues 1–64 (MVRRFLVTLR…LGQQPLPRRP (64 aa)) is interaction with CDK5RAP3 and MDM2. The tract at residues 56–132 (GQQPLPRRPG…CLGPSARGPG (77 aa)) is disordered. Positions 71–83 (RPSGGAAAAPRRG) are enriched in low complexity. Residues 84–99 (AQLRRPRHSHPTRARR) are compositionally biased toward basic residues. Residues 103–117 (GLPGHAGGAAPGRGA) show a composition bias toward gly residues.

In terms of assembly, does not interact with cyclins, CDK1, CDK2, CDK4, CDK5 or CDK6. Binds to BCL6, E2F1, HUWE1, MDM2, MYC, NPM1/B23, TOP1/TOPOI and UBE2I/UBC9. Interacts with TBRG1 and COMMD1. Interacts with CDKN2AIP and E4F1. Interacts with CDK5RAP3 and MDM2; form a ternary complex involved in regulation of p53/TP53. Interacts with NOP53; the interaction is direct and promotes ARF nucleoplasmic relocalization and ubiquitin-mediated proteasomal degradation. Interacts with TTF1 (via the N-terminal region (NRD) and a C-terminal region); the interaction is direct and inhibits the nucleolar localization of TTF1. As to quaternary structure, interacts with C1QBP. Ubiquitinated in normal cells by TRIP12 via the ubiquitin fusion degradation (UFD) pathway, a process that mediates ubiquitination at the N-terminus, regardless of the absence of lysine residues. Ubiquitination leads to its proteasomal degradation. In cancer cells, however, TRIP12 is located in a different cell compartment, preventing ubiquitination and degradation.

The protein localises to the nucleus. Its subcellular location is the nucleolus. The protein resides in the nucleoplasm. It localises to the mitochondrion. Its function is as follows. Capable of inducing cell cycle arrest in G1 and G2 phases. Acts as a tumor suppressor. Binds to MDM2 and blocks its nucleocytoplasmic shuttling by sequestering it in the nucleolus. This inhibits the oncogenic action of MDM2 by blocking MDM2-induced degradation of p53 and enhancing p53-dependent transactivation and apoptosis. Also induces G2 arrest and apoptosis in a p53-independent manner by preventing the activation of cyclin B1/CDC2 complexes. Binds to BCL6 and down-regulates BCL6-induced transcriptional repression. Binds to E2F1 and MYC and blocks their transcriptional activator activity but has no effect on MYC transcriptional repression. Binds to TOP1/TOPOI and stimulates its activity. This complex binds to rRNA gene promoters and may play a role in rRNA transcription and/or maturation. Interacts with NPM1/B23 and promotes its polyubiquitination and degradation, thus inhibiting rRNA processing. Plays a role in inhibiting ribosome biogenesis, perhaps by binding to the nucleolar localization sequence of transcription termination factor TTF1, and thereby preventing nucleolar localization of TTF1. Interacts with COMMD1 and promotes its 'Lys63'-linked polyubiquitination. Interacts with UBE2I/UBC9 and enhances sumoylation of a number of its binding partners including MDM2 and E2F1. Binds to HUWE1 and represses its ubiquitin ligase activity. May play a role in controlling cell proliferation and apoptosis during mammary gland development. Functionally, may be involved in regulation of autophagy and caspase-independent cell death; the short-lived mitochondrial isoform is stabilized by C1QBP. The polypeptide is Tumor suppressor ARF (Homo sapiens (Human)).